We begin with the raw amino-acid sequence, 94 residues long: Pyrimidine/purine nucleoside phosphorylase (94 aa).

The protein belongs to the nucleoside phosphorylase PpnP family.

It carries out the reaction a purine D-ribonucleoside + phosphate = a purine nucleobase + alpha-D-ribose 1-phosphate. The catalysed reaction is adenosine + phosphate = alpha-D-ribose 1-phosphate + adenine. The enzyme catalyses cytidine + phosphate = cytosine + alpha-D-ribose 1-phosphate. It catalyses the reaction guanosine + phosphate = alpha-D-ribose 1-phosphate + guanine. It carries out the reaction inosine + phosphate = alpha-D-ribose 1-phosphate + hypoxanthine. The catalysed reaction is thymidine + phosphate = 2-deoxy-alpha-D-ribose 1-phosphate + thymine. The enzyme catalyses uridine + phosphate = alpha-D-ribose 1-phosphate + uracil. It catalyses the reaction xanthosine + phosphate = alpha-D-ribose 1-phosphate + xanthine. Catalyzes the phosphorolysis of diverse nucleosides, yielding D-ribose 1-phosphate and the respective free bases. Can use uridine, adenosine, guanosine, cytidine, thymidine, inosine and xanthosine as substrates. Also catalyzes the reverse reactions. This chain is Pyrimidine/purine nucleoside phosphorylase, found in Pseudomonas fluorescens (strain ATCC BAA-477 / NRRL B-23932 / Pf-5).